The sequence spans 344 residues: Angiopoietin-related protein 7 (344 aa).

Positions 1-26 (MLKKTLSAVAWLCIFLVAFVSHPVWP) are cleaved as a signal peptide. A coiled-coil region spans residues 37–116 (ELTAATCCEE…IGIMQLQAAQ (80 aa)). N-linked (GlcNAc...) asparagine glycosylation is present at Asn-56. A Fibrinogen C-terminal domain is found at 120 to 341 (QTSADAIYDC…RVEMKIRPED (222 aa)). An intrachain disulfide couples Cys-129 to Cys-160. N-linked (GlcNAc...) asparagine glycosylation is found at Asn-251 and Asn-265. An intrachain disulfide couples Cys-283 to Cys-296.

Homotetramer; disulfide-linked.

It is found in the secreted. Functionally, has a role in the formation and organization of the extracellular matrix. In the eye, it functions as a mediator of dexamethasone-induced matrix deposition in the trabecular meshwork, the tissue responsible for the outflow of the ocular aqueous humor and for the maintenance of intraocular pressure. Is a negative regulator of angiogenesis in the cornea, and plays a major role in maintaining corneal avascularity and transparency. This Bos taurus (Bovine) protein is Angiopoietin-related protein 7 (ANGPTL7).